A 300-amino-acid chain; its full sequence is Acetylglutamate kinase (300 aa).

Residues 68-69 (GG), Arg-90, and Asn-195 each bind substrate.

Belongs to the acetylglutamate kinase family. ArgB subfamily.

It is found in the cytoplasm. The catalysed reaction is N-acetyl-L-glutamate + ATP = N-acetyl-L-glutamyl 5-phosphate + ADP. The protein operates within amino-acid biosynthesis; L-arginine biosynthesis; N(2)-acetyl-L-ornithine from L-glutamate: step 2/4. In terms of biological role, catalyzes the ATP-dependent phosphorylation of N-acetyl-L-glutamate. This chain is Acetylglutamate kinase, found in Halorhodospira halophila (strain DSM 244 / SL1) (Ectothiorhodospira halophila (strain DSM 244 / SL1)).